A 29-amino-acid polypeptide reads, in one-letter code: Cliotide T18 (29 aa).

The cyclopeptide (Gly-Asn) cross-link spans 1-29 (GLPICGETCFTGTCYTPGCTCSYPVCKKN). 3 disulfides stabilise this stretch: cysteine 5-cysteine 19, cysteine 9-cysteine 21, and cysteine 14-cysteine 26.

In terms of processing, contains 3 disulfide bonds. This is a cyclic peptide. In terms of tissue distribution, expressed in root nodules but not in seed.

Functionally, probably participates in a plant defense mechanism. The protein is Cliotide T18 of Clitoria ternatea (Butterfly pea).